Reading from the N-terminus, the 48-residue chain is Small, acid-soluble spore protein O (48 aa).

Residues 1 to 48 (MAKRKANHVINGMNNAKRQGNGAGYIENDQHILTEAERQNNKKRKTNQ) are disordered. Positions 28-40 (NDQHILTEAERQN) are enriched in basic and acidic residues.

The protein belongs to the SspO family.

The protein localises to the spore core. This is Small, acid-soluble spore protein O from Bacillus licheniformis (strain ATCC 14580 / DSM 13 / JCM 2505 / CCUG 7422 / NBRC 12200 / NCIMB 9375 / NCTC 10341 / NRRL NRS-1264 / Gibson 46).